A 342-amino-acid polypeptide reads, in one-letter code: Trace amine-associated receptor 3 (342 aa).

Over 1-35 (MDLIYIPEDLSSCPKFGNKSCPPTNRSFRVRLIMY) the chain is Extracellular. N-linked (GlcNAc...) asparagine glycosylation is found at N18 and N25. Disulfide bonds link C21–C185 and C104–C189. Residues 36–56 (LLMTGAMVITIFGNLVIIISI) traverse the membrane as a helical segment. The Cytoplasmic segment spans residues 57–68 (SHFKQLHSPTNF). Residues 69–89 (LILSMATTDFLLGFVIMPYSM) form a helical membrane-spanning segment. Residues 90-150 (VRSVESCWYF…TTMTASMIKR (61 aa)) are Extracellular-facing. A helical membrane pass occupies residues 151-168 (LLFFCWAAPALFSFGLVL). At 169–172 (SEAN) the chain is on the cytoplasmic side. The segment at 173 to 186 (VSGMQSYEILIACF) is extracellular Loop 2 (ECL2). The chain crosses the membrane as a helical span at residues 173 to 193 (VSGMQSYEILIACFNFCALTF). Residues 194–198 (NKFWG) are Extracellular-facing. A helical transmembrane segment spans residues 199–223 (TILFTTCFFTPGSIMVGIYGKIFIV). Over 224-256 (SRRHARALGNMPENTKGAGRNLSKKKDRKAAKT) the chain is Cytoplasmic. A helical transmembrane segment spans residues 257-277 (LGIVMGVFLACWLPCFLAVLI). Topologically, residues 278-286 (DPYLDYSTP) are extracellular. Residues 287–307 (IIVLDLLVWLGYFNSTCNPLI) traverse the membrane as a helical segment. The Cytoplasmic portion of the chain corresponds to 308–342 (HGFFYPWFRKALEHIVSGKIFRSNSDTANLFPEAH).

This sequence belongs to the G-protein coupled receptor 1 family.

The protein resides in the cell membrane. Olfactory receptor activated by several primary trace amines, including isoamylamine. Activated by isoamylamine and cyclohexylamine, but not to the corresponding alcohols, isoamylalcohol and cyclohexanol. This receptor is probably mediated by the G(s)-class of G-proteins which activate adenylate cyclase. This Rattus norvegicus (Rat) protein is Trace amine-associated receptor 3 (Taar3).